The sequence spans 552 residues: 3-hydroxy-3-methylglutaryl-coenzyme A reductase 1 (552 aa).

2 stretches are compositionally biased toward low complexity: residues 79–99 (QHNQQQQQKQQPSQDYIQQPQ) and 112–122 (QQQQQQQQQQQ). Positions 79–138 (QHNQQQQQKQQPSQDYIQQPQNDNNINSGKEQEQQQQQQQQQQQTPDITNQPTKTNKKIP) are disordered. Residues 123 to 132 (TPDITNQPTK) show a composition bias toward polar residues. The active-site Charge relay system is the E237. N288 carries N-linked (GlcNAc...) asparagine glycosylation. K369 serves as the catalytic Charge relay system. An N-linked (GlcNAc...) asparagine glycan is attached at N375. The Charge relay system role is filled by D445. H543 functions as the Proton donor in the catalytic mechanism.

The protein belongs to the HMG-CoA reductase family.

The protein localises to the endoplasmic reticulum membrane. It catalyses the reaction (R)-mevalonate + 2 NADP(+) + CoA = (3S)-3-hydroxy-3-methylglutaryl-CoA + 2 NADPH + 2 H(+). It functions in the pathway metabolic intermediate biosynthesis; (R)-mevalonate biosynthesis; (R)-mevalonate from acetyl-CoA: step 3/3. Its function is as follows. This transmembrane glycoprotein is involved in the control of cholesterol biosynthesis. It is the rate-limiting enzyme of the sterol biosynthesis. The sequence is that of 3-hydroxy-3-methylglutaryl-coenzyme A reductase 1 (hmgA) from Dictyostelium discoideum (Social amoeba).